The primary structure comprises 422 residues: Dioxygenase str8 (422 aa).

Residues Cys-73, Cys-75, Cys-78, and His-119 each coordinate Zn(2+). The Fe cation site is built by His-243, Asp-245, and His-382.

It belongs to the gamma-BBH/TMLD family. Fe(2+) is required as a cofactor.

It functions in the pathway mycotoxin biosynthesis. Dioxygenase; part of the gene cluster that mediates the biosynthesis of strobilurin A, an antifungal polyketide that contains a key beta-methoxyacrylate toxophore that targets the complex III of the mitochondrial electron transport chain. Strobilurin biosynthesis begins with construction of benzoyl CoA by step-wise elimination of ammonia from phenylalanine by the phenylalanine ammonia-lyase str11, oxygenation by str8 and retro-Claisen reaction to form benzoic acid, which is activated to its CoA thiolester benzoyl CoA by the dedicated CoA ligase str10. Benzoyl CoA forms the starter unit for the highly reducing polyketide synthase stpks1 that produces the polyketide prestrobilutin A. The FAD-dependent oxygenase str9 then catalyzes the key oxidative rearrangement responsible for the creation of the beta-methoxyacrylate toxophore. Str9 performs epoxidation of the 2,3 olefin of prestrobilutin A, followed by Meinwald rearrangement to furnish the aldehyde intermediate. Rapid enolization of the aldehyde intermediate would give the beta-methoxyacrylate skeleton and methylations catalyzed by str2 and str3 complete the synthesis and lead to the production of strobilurin A. The short-chain dehydrogenase stl2 and the dehydrogenase str4 play a role in the shunt pathway leading to the production of bolineol. The cluster encodes no obvious halogenase gene that could be involved in production of strobilurin B, nor any obvious dimethylallyl-transferase that could be involved in the production of strobilurin G. It is possible that unknown proteins encoded in, or near, the cluster (such as str1 or stl1) may form new classes of halogenases or dimethylally-transferases, or that the responsible genes are located elsewhere on the genome. Similarly, proteins encoded by str5/str6 hydrolases appear to have no chemical role in the biosynthesis of strobilurin A. Finally, no obvious self-resistance gene is found within the cluster. In Strobilurus tenacellus, this protein is Dioxygenase str8.